The primary structure comprises 179 residues: UPF0316 protein BH0621 (179 aa).

Transmembrane regions (helical) follow at residues 9-29 (ALTMILIILIINVVYVTLFTV), 41-61 (LAATVSMIEIIVYVLGLSLVL), and 67-87 (IENLIAYAVGYGIGVITGMKV).

The protein belongs to the UPF0316 family.

It localises to the cell membrane. In Halalkalibacterium halodurans (strain ATCC BAA-125 / DSM 18197 / FERM 7344 / JCM 9153 / C-125) (Bacillus halodurans), this protein is UPF0316 protein BH0621.